A 354-amino-acid chain; its full sequence is Probable L-ascorbate-6-phosphate lactonase UlaG (354 aa).

This sequence belongs to the UlaG family. A divalent metal cation serves as cofactor.

The protein resides in the cytoplasm. The catalysed reaction is L-ascorbate 6-phosphate + H2O = 3-dehydro-L-gulonate 6-phosphate. Its pathway is cofactor degradation; L-ascorbate degradation; D-xylulose 5-phosphate from L-ascorbate: step 1/4. Functionally, probably catalyzes the hydrolysis of L-ascorbate-6-P into 3-keto-L-gulonate-6-P. Is essential for L-ascorbate utilization under anaerobic conditions. The protein is Probable L-ascorbate-6-phosphate lactonase UlaG of Escherichia coli O139:H28 (strain E24377A / ETEC).